A 4128-amino-acid chain; its full sequence is DNA-dependent protein kinase catalytic subunit (4128 aa).

Position 117 is an N6-acetyllysine (K117). The stretch at 288 to 323 (DNYITLFEVLSKWCSHTNVELKKAAHSALESFLRQI) is one HEAT 1 repeat. Phosphoserine occurs at positions 511, 686, 840, and 891. 2 HEAT repeats span residues 1001–1037 (QDTVALLEAILDGIVDPVDSTLRDFCGRCVQEFLKWS) and 1050–1086 (PVNSKSLFKRLYSLALHPNAFKRLGAALAFNHIYKEF). Position 1062 is a phosphoserine (S1062). K1206 carries the post-translational modification N6-acetyllysine. The interaction with C1D stretch occupies residues 1501–1536 (LDPSCKSLANGLLELAFGFGGLCDHLVSLLLNSAML). The segment at 1501 to 1536 (LDPSCKSLANGLLELAFGFGGLCDHLVSLLLNSAML) is leucine-zipper. A TPR 1 repeat occupies 1720–1753 (PMKSDEFPPDSLKYNNYVDCMKKFLDALELSQSP). K1967 is modified (N6-acetyllysine). The disordered stretch occupies residues 2049–2071 (YSYSSQDRKPTTGHFQRREHQDS). S2053 carries the post-translational modification Phosphoserine; by autocatalysis. Residues 2054-2070 (QDRKPTTGHFQRREHQD) show a composition bias toward basic and acidic residues. K2255 is modified (N6-acetyllysine). Residues 2432-3213 (LDIVYKMVAK…DHSMSVDEDE (782 aa)) are KIP-binding. Residue T2531 is modified to Phosphothreonine. Residue T2605 is modified to Phosphothreonine; by autocatalysis. S2608 carries the phosphoserine; by autocatalysis modification. The segment at 2614-2635 (TQTQEGPLSDQRQKPGQVRATQ) is disordered. T2634 and T2643 each carry phosphothreonine; by autocatalysis. The segment at 2738–2766 (EKLSLLYAKRGLMEQKLEKDIKSEFKMKQ) is may split the end of the DNA molecule, with the two strands separating around the region. In terms of domain architecture, FAT spans 2907–3539 (PTKRVRGKTC…IYPFIISSES (633 aa)). TPR repeat units lie at residues 2921 to 2954 (VLRWMELAKLYRSIGEYDVLRGIFSSELGTTQDT) and 2956 to 2983 (NALLAEARSDYCQAAKLYDEALNKLEWV). Residue S3206 is modified to Phosphoserine. An N6-acetyllysine mark is found at K3241, K3260, K3638, and K3642. Positions 3722–4053 (FDERVKVMLS…IRYAKRKLAG (332 aa)) constitute a PI3K/PI4K catalytic domain. Residues 3728–3734 (VMLSLRK) are G-loop. Phosphoserine occurs at positions 3731 and 3821. The catalytic loop stretch occupies residues 3919 to 3927 (GIGDRHLNN). Residues 3939 to 3964 (GIDFGHAFGSATQFLPVPELMPFRLT) are activation loop. At S4026 the chain carries Phosphoserine. One can recognise an FATC domain in the interval 4096–4128 (SGLSEETQVKCLVDQATDPNILGRTWEGWEPWM).

Belongs to the PI3/PI4-kinase family. In terms of assembly, DNA-PK is a heterotrimer of PRKDC and the Ku dimer (composed of XRCC6/Ku70 and XRCC5/Ku86). Formation of this complex may be promoted by interaction with ILF3. Component of the core long-range non-homologous end joining (NHEJ) complex (also named DNA-PK complex) composed of PRKDC, LIG4, XRCC4, XRCC6/Ku70, XRCC5/Ku86 and NHEJ1/XLF. Additional component of the NHEJ complex includes PAXX. Following autophosphorylation, PRKDC dissociates from DNA. Interacts with DNA-PKcs-interacting protein (KIP) with the region upstream the kinase domain. PRKDC alone also interacts with and phosphorylates DCLRE1C, thereby activating the latent endonuclease activity of this protein. Interacts with C1D. Interacts with TTI1 and TELO2. Interacts with CIB1. Interacts with SETX. Interacts with NR4A3; the DNA-dependent protein kinase complex DNA-PK phosphorylates and activates NR4A3 and prevents NR4A3 ubiquitination and degradation. Interacts with BRAT1. Part of the HDP-RNP complex composed of at least HEXIM1, PRKDC, XRCC5, XRCC6, paraspeckle proteins (SFPQ, NONO, PSPC1, RBM14, and MATR3) and NEAT1 RNA. Interacts with KAT5. In terms of processing, autophosphorylated at two clusters, the T2609 cluster and the S2056 cluster. Autophosphorylated on Ser-2053, Thr-2605, Thr-2634 and Thr-2643. Ser-2053 and Thr-2605 are DNA damage-inducible phosphorylation sites (inducible with ionizing radiation, IR) dephosphorylated by PPP5C. Autophosphorylation induces a conformational change that leads to remodeling of the DNA-PK complex, requisite for efficient end processing and DNA repair. Autophosphorylation in trans within DNA-PK complexes loaded on DNA ends leads to the dissociation of PRKDC from DNA and the transition into the short-range NHEJ complex. Autophosphorylation of the T2609 cluster is required for hematopoietic development and protein synthesis in erythrocytes precursors. S-nitrosylated by GAPDH. Post-translationally, polyubiquitinated by RNF144A, leading to proteasomal degradation.

It is found in the nucleus. The protein resides in the nucleolus. It localises to the cytoplasm. The protein localises to the cytosol. The enzyme catalyses L-seryl-[protein] + ATP = O-phospho-L-seryl-[protein] + ADP + H(+). The catalysed reaction is L-threonyl-[protein] + ATP = O-phospho-L-threonyl-[protein] + ADP + H(+). With respect to regulation, activity seems to be attenuated by autophosphorylation. Binding to the SL1 region of U3 small nucleolar RNA promotes auto-phosphorylation activity. Inhibited by wortmannin. In terms of biological role, serine/threonine-protein kinase that acts as a molecular sensor for DNA damage. Involved in DNA non-homologous end joining (NHEJ) required for double-strand break (DSB) repair and V(D)J recombination. Must be bound to DNA to express its catalytic properties. Promotes processing of hairpin DNA structures in V(D)J recombination by activation of the hairpin endonuclease artemis (DCLRE1C). Recruited by XRCC5 and XRCC6 to DNA ends and is required to (1) protect and align broken ends of DNA, thereby preventing their degradation, (2) and sequester the DSB for repair by NHEJ. Acts as a scaffold protein to aid the localization of DNA repair proteins to the site of damage. The assembly of the DNA-PK complex at DNA ends is also required for the NHEJ ligation step. Found at the ends of chromosomes, suggesting a further role in the maintenance of telomeric stability and the prevention of chromosomal end fusion. Also involved in modulation of transcription. As part of the DNA-PK complex, involved in the early steps of ribosome assembly by promoting the processing of precursor rRNA into mature 18S rRNA in the small-subunit processome. Binding to U3 small nucleolar RNA, recruits PRKDC and XRCC5/Ku86 to the small-subunit processome. Recognizes the substrate consensus sequence [ST]-Q. Phosphorylates 'Ser-139' of histone variant H2AX, thereby regulating DNA damage response mechanism. Phosphorylates ASF1A, DCLRE1C, c-Abl/ABL1, histone H1, HSPCA, c-jun/JUN, p53/TP53, PARP1, POU2F1, DHX9, FH, SRF, NHEJ1/XLF, XRCC1, XRCC4, XRCC5, XRCC6, WRN, MYC and RFA2. Can phosphorylate C1D not only in the presence of linear DNA but also in the presence of supercoiled DNA. Ability to phosphorylate p53/TP53 in the presence of supercoiled DNA is dependent on C1D. Acts as a regulator of the phosphatidylinositol 3-kinase/protein kinase B signal transduction by mediating phosphorylation of 'Ser-473' of protein kinase B (PKB/AKT1, PKB/AKT2, PKB/AKT3), promoting their activation. Contributes to the determination of the circadian period length by antagonizing phosphorylation of CRY1 'Ser-588' and increasing CRY1 protein stability, most likely through an indirect mechanism. Plays a role in the regulation of DNA virus-mediated innate immune response by assembling into the HDP-RNP complex, a complex that serves as a platform for IRF3 phosphorylation and subsequent innate immune response activation through the cGAS-STING pathway. Also regulates the cGAS-STING pathway by catalyzing phosphorylation of CGAS, thereby impairing CGAS oligomerization and activation. Also regulates the cGAS-STING pathway by mediating phosphorylation of PARP1. The sequence is that of DNA-dependent protein kinase catalytic subunit (Prkdc) from Mus musculus (Mouse).